The sequence spans 206 residues: Dephospho-CoA kinase (206 aa).

Residues 4–204 (VIGLTGGIAS…EGYIESHSED (201 aa)) enclose the DPCK domain. 12–17 (ASGKST) is an ATP binding site.

It belongs to the CoaE family.

It localises to the cytoplasm. The catalysed reaction is 3'-dephospho-CoA + ATP = ADP + CoA + H(+). It functions in the pathway cofactor biosynthesis; coenzyme A biosynthesis; CoA from (R)-pantothenate: step 5/5. In terms of biological role, catalyzes the phosphorylation of the 3'-hydroxyl group of dephosphocoenzyme A to form coenzyme A. This chain is Dephospho-CoA kinase, found in Staphylococcus saprophyticus subsp. saprophyticus (strain ATCC 15305 / DSM 20229 / NCIMB 8711 / NCTC 7292 / S-41).